Consider the following 109-residue polypeptide: uncharacterized protein (109 aa).

The N-terminal stretch at 1 to 22 is a signal peptide; it reads MKRFPLFLLFTLLTLSTVPAQA. Residues 39-109 form a disordered region; it reads AYNPDRGRDY…ERRMEDEYGR (71 aa). Over residues 41 to 109 the composition is skewed to basic and acidic residues; the sequence is NPDRGRDYED…ERRMEDEYGR (69 aa).

This is an uncharacterized protein from Escherichia coli O6:H1 (strain CFT073 / ATCC 700928 / UPEC).